The primary structure comprises 162 residues: Methyl-coenzyme M reductase II operon protein D (162 aa).

As to quaternary structure, MCR is composed of three subunits: alpha, beta, and gamma. The function of protein D is not known.

This is Methyl-coenzyme M reductase II operon protein D (mrtD) from Methanothermobacter thermautotrophicus (strain ATCC 29096 / DSM 1053 / JCM 10044 / NBRC 100330 / Delta H) (Methanobacterium thermoautotrophicum).